We begin with the raw amino-acid sequence, 322 residues long: Putative pyruvyl transferase EpsO (322 aa).

This sequence belongs to the polysaccharide pyruvyl transferase family.

Its function is as follows. May be involved in the production of the exopolysaccharide (EPS) component of the extracellular matrix during biofilm formation. EPS is responsible for the adhesion of chains of cells into bundles. The polypeptide is Putative pyruvyl transferase EpsO (epsO) (Bacillus subtilis (strain 168)).